The primary structure comprises 79 residues: Tau-theraphotoxin-Hs1a (79 aa).

Disulfide bonds link C2-C16, C9-C23, C15-C31, C44-C58, C51-C63, and C57-C71. Domain repeat units lie at residues 2–31 (CAKEGEVCSWGKKCCDLDNFYCPMEFIPHC) and 42–71 (TNCAKEGEVCGWGSKCCHGLDCPLAFIPYC). Residues 2-71 (CAKEGEVCSW…DCPLAFIPYC (70 aa)) form a 2 X approximate repeats with cysteine pattern C-C-CC-C-C region.

Belongs to the neurotoxin 23 family. Double-knot toxin subfamily. Interacts with TRPV1 (2 toxins (4 moieties) bind 1 channel (homotetramer)). Expressed by the venom gland.

Its subcellular location is the secreted. Its function is as follows. Selectively activates the heat-activated TRPV1 channel. It binds to TRPV1 in an open state-dependent manner, trapping it there to produce irreversible currents. It binds to the outer edge of the external pore of TRPV1 in a counterclockwise configuration, using a limited protein-protein interface and inserting hydrophobic residues into the bilayer. It also partitions naturally into membranes, with the two lobes exhibiting opposing energetics for membrane partitioning (K1) and channel activation (K2). In addition, the toxin disrupts a cluster of hydrophobic residues behind the selectivity filter that are critical for channel activation. The polypeptide is Tau-theraphotoxin-Hs1a (Cyriopagopus schmidti (Chinese bird spider)).